A 678-amino-acid chain; its full sequence is UvrABC system protein B (678 aa).

Residues 35–422 (EGVSDGLMFQ…ADNVVEQVVR (388 aa)) form the Helicase ATP-binding domain. Residue 48–55 (GVTGSGKT) participates in ATP binding. A Beta-hairpin motif is present at residues 101-124 (YYDYYQPEAYVPTRDLFIEKDSSI). The region spanning 439 to 605 (QVDDLLGEIH…GVSKAVRELI (167 aa)) is the Helicase C-terminal domain. The 36-residue stretch at 633 to 668 (AREIRRLEKLMMDHARNLEFEQAAAARDALNALKSR) folds into the UVR domain.

This sequence belongs to the UvrB family. Forms a heterotetramer with UvrA during the search for lesions. Interacts with UvrC in an incision complex.

The protein localises to the cytoplasm. Its function is as follows. The UvrABC repair system catalyzes the recognition and processing of DNA lesions. A damage recognition complex composed of 2 UvrA and 2 UvrB subunits scans DNA for abnormalities. Upon binding of the UvrA(2)B(2) complex to a putative damaged site, the DNA wraps around one UvrB monomer. DNA wrap is dependent on ATP binding by UvrB and probably causes local melting of the DNA helix, facilitating insertion of UvrB beta-hairpin between the DNA strands. Then UvrB probes one DNA strand for the presence of a lesion. If a lesion is found the UvrA subunits dissociate and the UvrB-DNA preincision complex is formed. This complex is subsequently bound by UvrC and the second UvrB is released. If no lesion is found, the DNA wraps around the other UvrB subunit that will check the other stand for damage. The protein is UvrABC system protein B of Bordetella pertussis (strain Tohama I / ATCC BAA-589 / NCTC 13251).